The chain runs to 2570 residues: Stabilin-1 (2570 aa).

A signal peptide spans 1 to 25 (MAGPRGLLPLCLLAFCLAGFSFVRG). Residues 26 to 2478 (QVLFKGCDVK…LAPEAPPVAA (2453 aa)) are Extracellular-facing. 4 EGF-like domains span residues 110-148 (HECP…SACQ), 156-193 (FGPD…PHCD), 195-229 (ELPV…QGSE), and 232-271 (APNP…MVCL). 11 disulfides stabilise this stretch: Cys112-Cys126, Cys120-Cys136, Cys138-Cys147, Cys160-Cys171, Cys164-Cys181, Cys183-Cys192, Cys199-Cys210, Cys204-Cys217, Cys236-Cys247, Cys241-Cys257, and Cys259-Cys270. N-linked (GlcNAc...) asparagine glycosylation occurs at Asn133. N-linked (GlcNAc...) asparagine glycans are attached at residues Asn286, Asn312, Asn413, Asn606, Asn673, Asn712, and Asn745. 2 consecutive FAS1 domains span residues 356–494 (YGHL…TGLR) and 506–641 (KRTI…DGIL). In terms of domain architecture, EGF-like 5 spans 728-768 (DCTQCPGGFSNPCYGKGNCSDGIQGNGACLCFPDYKGIACH). Intrachain disulfides connect Cys732-Cys746, Cys740-Cys756, and Cys758-Cys767. Asn816 is a glycosylation site (N-linked (GlcNAc...) asparagine). EGF-like domains lie at 818–858 (SMGD…DGFS), 861–903 (PSNP…RVCV), 904–946 (AIDE…YQCS), and 947–986 (PIDP…DGFS). Cystine bridges form between Cys822-Cys837, Cys831-Cys846, Cys865-Cys879, Cys873-Cys889, Cys891-Cys902, Cys908-Cys922, Cys916-Cys932, Cys934-Cys945, Cys951-Cys964, and Cys958-Cys974. 2 consecutive FAS1 domains span residues 988-1118 (YGDI…SQVL) and 1128-1253 (GQGL…SGVL). 6 N-linked (GlcNAc...) asparagine glycosylation sites follow: Asn1087, Asn1096, Asn1170, Asn1178, Asn1222, and Asn1274. Positions 1327–1392 (TLCEPCPGGL…CDCAHGLCQE (66 aa)) constitute a Laminin EGF-like 1 domain. Cystine bridges form between Cys1332/Cys1346, Cys1340/Cys1356, and Cys1358/Cys1367. Asn1378 carries N-linked (GlcNAc...) asparagine glycosylation. Intrachain disulfides connect Cys1379-Cys1390, Cys1383-Cys1400, Cys1402-Cys1411, Cys1420-Cys1430, Cys1424-Cys1440, Cys1442-Cys1453, Cys1459-Cys1472, Cys1466-Cys1482, Cys1484-Cys1495, Cys1501-Cys1514, Cys1508-Cys1524, Cys1526-Cys1538, Cys1544-Cys1557, Cys1551-Cys1567, and Cys1569-Cys1581. EGF-like domains are found at residues 1416 to 1454 (TSPQ…IFCS), 1455 to 1496 (EVDP…ELCQ), 1497 to 1539 (EINS…RTCE), and 1540 to 1582 (LLDP…LTCR). Residue Asn1471 is glycosylated (N-linked (GlcNAc...) asparagine). 2 FAS1 domains span residues 1582–1708 (RARV…DRVL) and 1724–1864 (PRRN…DQLL). Residues Asn1626 and Asn1727 are each glycosylated (N-linked (GlcNAc...) asparagine). The region spanning 1966 to 2031 (SECQACPGGP…RCTVHGRCDE (66 aa)) is the Laminin EGF-like 2 domain. Cystine bridges form between Cys1971–Cys1985, Cys1979–Cys1995, Cys1997–Cys2006, Cys2018–Cys2029, Cys2023–Cys2039, Cys2041–Cys2050, Cys2060–Cys2070, Cys2064–Cys2076, Cys2078–Cys2089, Cys2095–Cys2108, Cys2102–Cys2117, Cys2119–Cys2130, Cys2136–Cys2150, Cys2144–Cys2160, and Cys2162–Cys2173. EGF-like domains follow at residues 2056 to 2090 (LQPV…RVCT), 2091 to 2131 (VADL…WSCR), and 2132 to 2174 (ARNP…LQCL). Asn2107 carries N-linked (GlcNAc...) asparagine glycosylation. The Link domain maps to 2206 to 2301 (RAGVFHLQAT…SERWDAYCFR (96 aa)). N-linked (GlcNAc...) asparagine glycans are attached at residues Asn2222, Asn2261, Asn2290, Asn2334, Asn2347, Asn2379, Asn2393, Asn2400, and Asn2424. Intrachain disulfides connect Cys2230–Cys2299 and Cys2254–Cys2275. In terms of domain architecture, FAS1 7 spans 2322–2459 (NGKLLDVLAA…GIIHALASPL (138 aa)). The helical transmembrane segment at 2479 to 2499 (GVGAVLAAGALLGLVAGALYL) threads the bilayer. Topologically, residues 2500-2570 (RARGKPMGFG…PDTQRILTVK (71 aa)) are cytoplasmic.

In terms of assembly, interacts with CHID1. In terms of tissue distribution, high levels found in spleen, lymph node, liver and placenta. Also expressed in endothelial cells.

The protein resides in the membrane. Acts as a scavenger receptor for acetylated low density lipoprotein. Binds to both Gram-positive and Gram-negative bacteria and may play a role in defense against bacterial infection. When inhibited in endothelial tube formation assays, there is a marked decrease in cell-cell interactions, suggesting a role in angiogenesis. Involved in the delivery of newly synthesized CHID1/SI-CLP from the biosynthetic compartment to the endosomal/lysosomal system. This chain is Stabilin-1 (STAB1), found in Homo sapiens (Human).